Consider the following 405-residue polypeptide: Aspartokinase (405 aa).

7-10 provides a ligand contact to ATP; it reads KYGG. Residue 25 to 30 participates in substrate binding; it reads RIAHYR. ATP is bound at residue Ser41. Substrate contacts are provided by residues 47 to 49, Glu74, 125 to 126, 150 to 153, and Ser153; these read TDE, LE, and RGGS. ATP contacts are provided by residues 173–174, 179–184, and Arg209; these read TD and YTTDPH. 2 ACT domains span residues 263-342 and 344-405; these read IGLI…IAKV and IVGV…LDKA. Substrate contacts are provided by residues Asp270, 288 to 290, Gln294, 355 to 356, 369 to 370, and 376 to 377; these read AVD, VP, NI, and SE.

This sequence belongs to the aspartokinase family. As to quaternary structure, tetramer consisting of 2 isoforms Alpha (catalytic and regulation) and of a homodimer of 2 isoforms Beta (regulation).

It carries out the reaction L-aspartate + ATP = 4-phospho-L-aspartate + ADP. Its pathway is amino-acid biosynthesis; L-lysine biosynthesis via DAP pathway; (S)-tetrahydrodipicolinate from L-aspartate: step 1/4. It functions in the pathway amino-acid biosynthesis; L-methionine biosynthesis via de novo pathway; L-homoserine from L-aspartate: step 1/3. It participates in amino-acid biosynthesis; L-threonine biosynthesis; L-threonine from L-aspartate: step 1/5. Its function is as follows. Catalyzes the phosphorylation of the beta-carboxyl group of aspartic acid with ATP to yield 4-phospho-L-aspartate, which is involved in the branched biosynthetic pathway leading to the biosynthesis of amino acids lysine, threonine, isoleucine and methionine. The chain is Aspartokinase (ask) from Thermus thermophilus (strain ATCC BAA-163 / DSM 7039 / HB27).